The primary structure comprises 156 residues: SsrA-binding protein (156 aa).

It belongs to the SmpB family.

The protein resides in the cytoplasm. Functionally, required for rescue of stalled ribosomes mediated by trans-translation. Binds to transfer-messenger RNA (tmRNA), required for stable association of tmRNA with ribosomes. tmRNA and SmpB together mimic tRNA shape, replacing the anticodon stem-loop with SmpB. tmRNA is encoded by the ssrA gene; the 2 termini fold to resemble tRNA(Ala) and it encodes a 'tag peptide', a short internal open reading frame. During trans-translation Ala-aminoacylated tmRNA acts like a tRNA, entering the A-site of stalled ribosomes, displacing the stalled mRNA. The ribosome then switches to translate the ORF on the tmRNA; the nascent peptide is terminated with the 'tag peptide' encoded by the tmRNA and targeted for degradation. The ribosome is freed to recommence translation, which seems to be the essential function of trans-translation. Required for trans-translation. Probably required for sporulation; deletion of the gene for tmRNA impairs sporulation via its effect on trans-translation, and as smpB is required for trans-translation under non-stress conditions, it is also probably required during sporulation. This chain is SsrA-binding protein, found in Bacillus subtilis (strain 168).